Consider the following 689-residue polypeptide: Elongation factor G (689 aa).

Positions 9 to 283 constitute a tr-type G domain; the sequence is AKFRNIGIMA…AIIEFMPSPL (275 aa). GTP contacts are provided by residues 18–25, 82–86, and 136–139; these read AHIDAGKT, DTPGH, and NKMD.

The protein belongs to the TRAFAC class translation factor GTPase superfamily. Classic translation factor GTPase family. EF-G/EF-2 subfamily.

It is found in the cytoplasm. In terms of biological role, catalyzes the GTP-dependent ribosomal translocation step during translation elongation. During this step, the ribosome changes from the pre-translocational (PRE) to the post-translocational (POST) state as the newly formed A-site-bound peptidyl-tRNA and P-site-bound deacylated tRNA move to the P and E sites, respectively. Catalyzes the coordinated movement of the two tRNA molecules, the mRNA and conformational changes in the ribosome. The protein is Elongation factor G of Clostridium botulinum (strain Okra / Type B1).